A 425-amino-acid chain; its full sequence is 2,3-diketo-L-gulonate TRAP transporter large permease protein YiaN (425 aa).

11 helical membrane-spanning segments follow: residues 3-23 (VLIF…IAWA), 54-74 (FSLL…AGGL), 93-113 (LGYV…SAVA), 139-159 (LIAS…FIIF), 170-190 (LFMA…LTWW), 209-229 (IWHS…IIGG), 235-255 (FTPT…ATVI), 277-297 (VVMF…IAEL), 314-334 (LLFI…DLTP), 355-375 (IYFG…PPIG), and 399-419 (YVLV…LIIL).

It belongs to the TRAP transporter large permease family. The complex comprises the extracytoplasmic solute receptor protein YiaO, and the two transmembrane proteins YiaM and YiaN.

The protein resides in the cell inner membrane. Its function is as follows. Part of the tripartite ATP-independent periplasmic (TRAP) transport system YiaMNO involved in the uptake of 2,3-diketo-L-gulonate. In Escherichia coli (strain K12), this protein is 2,3-diketo-L-gulonate TRAP transporter large permease protein YiaN (yiaN).